Here is a 200-residue protein sequence, read N- to C-terminus: 3-isopropylmalate dehydratase small subunit (200 aa).

The protein belongs to the LeuD family. LeuD type 1 subfamily. In terms of assembly, heterodimer of LeuC and LeuD.

The catalysed reaction is (2R,3S)-3-isopropylmalate = (2S)-2-isopropylmalate. The protein operates within amino-acid biosynthesis; L-leucine biosynthesis; L-leucine from 3-methyl-2-oxobutanoate: step 2/4. In terms of biological role, catalyzes the isomerization between 2-isopropylmalate and 3-isopropylmalate, via the formation of 2-isopropylmaleate. This Vibrio vulnificus (strain CMCP6) protein is 3-isopropylmalate dehydratase small subunit.